A 278-amino-acid chain; its full sequence is MTVLHSVDFFPSGNASVAIEPRLPQADFPEHHHDFHEIVIVEHGTGIHVFNGQPYTITGGTVCFVRDHDRHLYEHTDNLCLTNVLYRSPDRFQFLAGLNQLLPQELDGQYPSHWRVNHSVLQQVRQLVAQMEQQEGENDLPSTASREILFMQLLLLLRKSSLQENLENSASRLNLLLAWLEDHFADEVNWDAVADQFSLSLRTLHRQLKQQTGLTPQRYLNRLRLMKARHLLRHSEASVTDIAYRCGFSDSNHFSTLFHREFNWSPRDIRQGRDGFLQ.

In terms of domain architecture, HTH araC/xylS-type spans 174–272 (NLLLAWLEDH…NWSPRDIRQG (99 aa)). 2 consecutive DNA-binding regions (H-T-H motif) follow at residues 191 to 212 (DAVA…KQQT) and 239 to 262 (VTDI…HREF).

In terms of assembly, binds DNA as a dimer.

The protein resides in the cytoplasm. Its function is as follows. Activates expression of the rhaBAD and rhaT operons. The polypeptide is HTH-type transcriptional activator RhaS (Shigella boydii serotype 18 (strain CDC 3083-94 / BS512)).